The primary structure comprises 555 residues: Suppressor of tumorigenicity 7 protein-like (555 aa).

Transmembrane regions (helical) follow at residues 32–52 (APWARGLLAVAAGLGLFYAAL), 76–96 (FYFALTVTSSFISGLIFVFEW), 504–524 (LPFFIHFTAGLCSFSAMLALL), and 531–551 (LMVVFAKAVLRVLWPVSAPSV).

Belongs to the ST7 family.

It localises to the membrane. In Gallus gallus (Chicken), this protein is Suppressor of tumorigenicity 7 protein-like (ST7L).